We begin with the raw amino-acid sequence, 455 residues long: Probable glycine dehydrogenase (decarboxylating) subunit 1 (455 aa).

The protein belongs to the GcvP family. N-terminal subunit subfamily. In terms of assembly, the glycine cleavage system is composed of four proteins: P, T, L and H. In this organism, the P 'protein' is a heterodimer of two subunits.

The catalysed reaction is N(6)-[(R)-lipoyl]-L-lysyl-[glycine-cleavage complex H protein] + glycine + H(+) = N(6)-[(R)-S(8)-aminomethyldihydrolipoyl]-L-lysyl-[glycine-cleavage complex H protein] + CO2. In terms of biological role, the glycine cleavage system catalyzes the degradation of glycine. The P protein binds the alpha-amino group of glycine through its pyridoxal phosphate cofactor; CO(2) is released and the remaining methylamine moiety is then transferred to the lipoamide cofactor of the H protein. This chain is Probable glycine dehydrogenase (decarboxylating) subunit 1, found in Saccharolobus solfataricus (strain ATCC 35092 / DSM 1617 / JCM 11322 / P2) (Sulfolobus solfataricus).